The primary structure comprises 340 residues: Flap endonuclease 1 (340 aa).

The N-domain stretch occupies residues 1–98; the sequence is MGVDLGGLVE…ETIKARAEVR (98 aa). Mg(2+)-binding residues include D27, D80, E151, E153, D172, D174, and D235. Residues 115–256 are I-domain; it reads EAYKYAQAST…TALKLVKKHG (142 aa). Residues 332–340 are interaction with PCNA; the sequence is KQKTLSSWF.

The protein belongs to the XPG/RAD2 endonuclease family. FEN1 subfamily. In terms of assembly, interacts with PCNA. PCNA stimulates the nuclease activity without altering cleavage specificity. Mg(2+) is required as a cofactor.

In terms of biological role, structure-specific nuclease with 5'-flap endonuclease and 5'-3' exonuclease activities involved in DNA replication and repair. During DNA replication, cleaves the 5'-overhanging flap structure that is generated by displacement synthesis when DNA polymerase encounters the 5'-end of a downstream Okazaki fragment. Binds the unpaired 3'-DNA end and kinks the DNA to facilitate 5' cleavage specificity. Cleaves one nucleotide into the double-stranded DNA from the junction in flap DNA, leaving a nick for ligation. Also involved in the base excision repair (BER) pathway. Acts as a genome stabilization factor that prevents flaps from equilibrating into structures that lead to duplications and deletions. Also possesses 5'-3' exonuclease activity on nicked or gapped double-stranded DNA. This Methanocella arvoryzae (strain DSM 22066 / NBRC 105507 / MRE50) protein is Flap endonuclease 1.